Here is a 215-residue protein sequence, read N- to C-terminus: MTFNIIKLENWDRKEYFEHYFNQQTTYSITKEIDITLFKDMIKKKGYEIYPSLIYAIMEVVNKNKVFRTGINSENKLGYWDKLNPLYTVFNKQTEKFTNIWTESDNNFTSFYNNYKNDLFEYKDKEEMFPKKPIPENTIPISMIPWIDFSSFNLNIGNNSSFLLPIITIGKFYSENNKIYIPVALQLHHAVCDGYHASLFINEFQDIIKKVDDWI.

Histidine 189 (proton acceptor) is an active-site residue.

The protein belongs to the chloramphenicol acetyltransferase family. In terms of assembly, homotrimer.

It catalyses the reaction chloramphenicol + acetyl-CoA = chloramphenicol 3-acetate + CoA. In terms of biological role, this enzyme is an effector of chloramphenicol resistance in bacteria. This is Chloramphenicol acetyltransferase (cat) from Staphylococcus intermedius.